The chain runs to 341 residues: MAP3K12-binding inhibitory protein 1 (341 aa).

Position 91 is a phosphoserine (serine 91). Residues lysine 94, lysine 127, lysine 137, lysine 151, and lysine 233 each participate in a glycyl lysine isopeptide (Lys-Gly) (interchain with G-Cter in SUMO2) cross-link. The segment at 170–341 (AEINENNVRE…EADSMAAHLP (172 aa)) is interaction with MAP3K12. A leucine-zipper 1 region spans residues 269-283 (IYQRIKKLEDKILEL). Lysine 299 carries the post-translational modification N6-acetyllysine; alternate. Lysine 299 is covalently cross-linked (Glycyl lysine isopeptide (Lys-Gly) (interchain with G-Cter in SUMO2); alternate). Glycyl lysine isopeptide (Lys-Gly) (interchain with G-Cter in SUMO2) cross-links involve residues lysine 302 and lysine 323. The segment at 312–327 (LAELDEKISALKRALL) is leucine-zipper 2.

As to quaternary structure, component of the ADA2A-containing complex (ATAC), composed of KAT14, KAT2A, TADA2L, TADA3L, ZZ3, MBIP, WDR5, YEATS2, CCDC101 and DR1. In the complex, it probably interacts directly with KAT2A, KAT14 and WDR5.

The protein localises to the nucleus. The protein resides in the cytoplasm. Functionally, inhibits the MAP3K12 activity to induce the activation of the JNK/SAPK pathway. Component of the ATAC complex, a complex with histone acetyltransferase activity on histones H3 and H4. The chain is MAP3K12-binding inhibitory protein 1 (Mbip) from Mus musculus (Mouse).